We begin with the raw amino-acid sequence, 5104 residues long: Malformin synthetase mlfA (5104 aa).

An adenylation 1 region spans residues 225–616 (ERHAVNRPHS…CGRADTQVKL (392 aa)). One can recognise a Carrier 1 domain in the interval 757 to 830 (SRLEQEIQLA…EAASLAEVQE (74 aa)). At serine 791 the chain carries O-(pantetheine 4'-phosphoryl)serine. Residues 868-1299 (EDVFPCTTMQ…ALNTLSLLQA (432 aa)) form a condensation 1 region. Positions 1327–1716 (DRWVTRQPEG…GRKDTQVKLR (390 aa)) are adenylation 2. Residues 1854–1931 (TPASELERTL…QLAAEFGGPA (78 aa)) form the Carrier 2 domain. Serine 1891 carries the O-(pantetheine 4'-phosphoryl)serine modification. Disordered regions lie at residues 1928–1961 (GGPAGQSASSASSTTEERFTFSTPDDSSTNDGVD) and 1998–2025 (TNKTPSVSSSSSSSSSSEKKKKAAKVDS). Composition is skewed to low complexity over residues 1934–1958 (SASSASSTTEERFTFSTPDDSSTND) and 2003–2013 (SVSSSSSSSSS). A condensation 2 region spans residues 2066–2481 (EDIYPATPLQ…TVSYSDKEAL (416 aa)). An adenylation 3 region spans residues 2504-2896 (VRTPHAPAVC…IGRRDGQLKL (393 aa)). In terms of domain architecture, Carrier 3 spans 3032–3108 (RPVTSQEREM…QLICHLNTIR (77 aa)). An O-(pantetheine 4'-phosphoryl)serine modification is found at serine 3069. 2 condensation regions span residues 3125–3590 (WVAL…TYDQ) and 3611–4029 (NIYP…EQLV). The tract at residues 4054-4444 (HSSREAVCAW…VGRKDNQIKF (391 aa)) is adenylation 4. One can recognise a Carrier 4 domain in the interval 4578 to 4654 (MPSTAAERKM…DLSDQARSLI (77 aa)). O-(pantetheine 4'-phosphoryl)serine is present on serine 4615. The interval 4691–5018 (DVLPTTSFQR…LQTIVQHQNN (328 aa)) is condensation 5.

Belongs to the NRP synthetase family.

Its pathway is secondary metabolite biosynthesis. Its function is as follows. Nonribosomal peptide synthetase; part of the gene cluster that mediates the biosynthesis of malformins, cyclic pentapeptides with a disulfide bond between 2 consecutive cysteins, that show potential anti-tumor as well as antimalarial and antitrypanosomal properties. The nonribosomal peptide synthetase mlfA is responsible of the formation of the cyclic pentapeptide. The malformin biosynthesis clusters in malformin-producing fungi also contain enzymes involved in the formation of the disulfide bond between the two consecutive cysteins within malformins, in addition to additional tailoring enzymes such as methyltransferases or oxidoreductases. They are also composed of up to 4 major facilitator superfamily transporters, and transcription factors probably involved in the regulation of the expression of those clusters. The sequence is that of Malformin synthetase mlfA from Aspergillus vadensis (strain CBS 113365 / IMI 142717 / IBT 24658).